A 426-amino-acid polypeptide reads, in one-letter code: Endothelin-1 receptor (426 aa).

The first 20 residues, 1–20 (METFCLKVTFWVALVGYVIG), serve as a signal peptide directing secretion. Residues 21–79 (DHPESYSTNLSTPVDFTTFHGTELSFLVTTHRPTNLALPSNGSMHSYCPQQTKITSAFK) are Extracellular-facing. Asn-29 and Asn-61 each carry an N-linked (GlcNAc...) asparagine glycan. A helical membrane pass occupies residues 80 to 101 (YINTVISCTIFIVGMVGNATLL). The Cytoplasmic portion of the chain corresponds to 102–111 (RIIYQNKCMR). Residues 112-131 (NGPNALIASLALGDLIYVVI) form a helical membrane-spanning segment. Residues 132-158 (DLPINVFKLLAGRWPFDHNDFGVFLCK) are Extracellular-facing. An intrachain disulfide couples Cys-157 to Cys-238. The helical transmembrane segment at 159–180 (LFPFLQKSSVGITVLNLCALSV) threads the bilayer. The Cytoplasmic segment spans residues 181–204 (DRYRAVASWSRVQGIGIPLITAIE). The helical transmembrane segment at 205–228 (IVSIWILSFILAIPEAIGFVMVPF) threads the bilayer. Residues 229–255 (EYKGEQHKTCMLNATSKFMEFYQDVKD) lie on the Extracellular side of the membrane. N-linked (GlcNAc...) asparagine glycosylation is present at Asn-241. A helical transmembrane segment spans residues 256–277 (WWLFGFYFCMPLVCTAIFYTLM). At 278–305 (TCEMLNRRNGSLRIALSEHLKQRREVAK) the chain is on the cytoplasmic side. The chain crosses the membrane as a helical span at residues 306–327 (TVFCLVVIFALCWFPLHLSRIL). The Extracellular segment spans residues 328-346 (KKTVYDEMDKNRCELLSFL). A helical transmembrane segment spans residues 347–371 (RLMDYIGINLATMNSCINPIALYFV). The Cytoplasmic portion of the chain corresponds to 372–426 (SKKFKNCFQSCLCCCCYQSKSLMTSVPMNGTSIQWKNHEQNNHNTERSSHKDSIN). Ser-424 carries the phosphoserine modification.

Belongs to the G-protein coupled receptor 1 family. Endothelin receptor subfamily. EDNRA sub-subfamily. Interacts with HDAC7 and KAT5.

The protein resides in the cell membrane. In terms of biological role, receptor for endothelin-1. Mediates its action by association with G proteins that activate a phosphatidylinositol-calcium second messenger system. The rank order of binding affinities for ET-A is: ET1 &gt; ET2 &gt;&gt; ET3. This chain is Endothelin-1 receptor, found in Canis lupus familiaris (Dog).